We begin with the raw amino-acid sequence, 416 residues long: Homogentisate 1,2-dioxygenase (416 aa).

The active-site Proton acceptor is the H275. H318 and E324 together coordinate Fe cation. Positions 333 and 354 each coordinate homogentisate. H354 is a binding site for Fe cation.

The protein belongs to the homogentisate dioxygenase family. As to quaternary structure, hexamer; dimer of trimers. Fe cation is required as a cofactor.

The enzyme catalyses homogentisate + O2 = 4-maleylacetoacetate + H(+). It functions in the pathway amino-acid degradation; L-phenylalanine degradation; acetoacetate and fumarate from L-phenylalanine: step 4/6. Functionally, involved in the catabolism of homogentisate (2,5-dihydroxyphenylacetate or 2,5-OH-PhAc), a central intermediate in the degradation of phenylalanine and tyrosine. Catalyzes the oxidative ring cleavage of the aromatic ring of homogentisate to yield maleylacetoacetate. This is Homogentisate 1,2-dioxygenase from Legionella pneumophila (strain Corby).